The following is a 173-amino-acid chain: Translation initiation factor IF-3 (173 aa).

Belongs to the IF-3 family. In terms of assembly, monomer.

Its subcellular location is the cytoplasm. IF-3 binds to the 30S ribosomal subunit and shifts the equilibrium between 70S ribosomes and their 50S and 30S subunits in favor of the free subunits, thus enhancing the availability of 30S subunits on which protein synthesis initiation begins. The chain is Translation initiation factor IF-3 from Methylorubrum populi (strain ATCC BAA-705 / NCIMB 13946 / BJ001) (Methylobacterium populi).